Consider the following 160-residue polypeptide: 6,7-dimethyl-8-ribityllumazine synthase (160 aa).

5-amino-6-(D-ribitylamino)uracil is bound by residues tryptophan 27, 59–61 (AIE), and 81–83 (VVI). (2S)-2-hydroxy-3-oxobutyl phosphate is bound at residue 86–87 (ET). The active-site Proton donor is histidine 89. Asparagine 114 contributes to the 5-amino-6-(D-ribitylamino)uracil binding site. Arginine 128 contributes to the (2S)-2-hydroxy-3-oxobutyl phosphate binding site.

The protein belongs to the DMRL synthase family. As to quaternary structure, homopentamer.

It carries out the reaction (2S)-2-hydroxy-3-oxobutyl phosphate + 5-amino-6-(D-ribitylamino)uracil = 6,7-dimethyl-8-(1-D-ribityl)lumazine + phosphate + 2 H2O + H(+). The protein operates within cofactor biosynthesis; riboflavin biosynthesis; riboflavin from 2-hydroxy-3-oxobutyl phosphate and 5-amino-6-(D-ribitylamino)uracil: step 1/2. Catalyzes the formation of 6,7-dimethyl-8-ribityllumazine by condensation of 5-amino-6-(D-ribitylamino)uracil with 3,4-dihydroxy-2-butanone 4-phosphate. This is the penultimate step in the biosynthesis of riboflavin. In Mycobacterium ulcerans (strain Agy99), this protein is 6,7-dimethyl-8-ribityllumazine synthase.